The primary structure comprises 251 residues: L,D-transpeptidase 1 (251 aa).

A signal peptide spans M1–A28. Residues L125–V250 enclose the L,D-TPase catalytic domain. Substrate-binding positions include Y190 and S203–G204. Residue H208 is the Proton donor/acceptor of the active site. The active-site Nucleophile is C226. N228 contacts substrate.

As to quaternary structure, monomer.

The protein resides in the periplasm. Its pathway is cell wall biogenesis; peptidoglycan biosynthesis. Is irreversibly inactivated by the beta-lactams carbapenems via the formation of a covalent adduct resulting from acylation of the catalytic Cys. Its function is as follows. Generates 3-&gt;3 cross-links in peptidoglycan, catalyzing the cleavage of the mDap(3)-D-Ala(4) bond of a tetrapeptide donor stem and the formation of a bond between the carbonyl of mDap(3) of the donor stem and the side chain of mDap(3) of the acceptor stem. Is specific for donor substrates containing a stem tetrapeptide since it cannot use pentapeptide stems. This chain is L,D-transpeptidase 1 (ldtA), found in Mycobacterium tuberculosis (strain CDC 1551 / Oshkosh).